The chain runs to 343 residues: Multidrug resistance protein MdtN (343 aa).

Residues 1-12 (MESTPKKAPRSK) lie on the Cytoplasmic side of the membrane. A helical; Signal-anchor for type II membrane protein membrane pass occupies residues 13–33 (FPALLVVALALVALVFVIWRV). Topologically, residues 34–343 (DSAPSTNDAY…ASAVANLEPQ (310 aa)) are periplasmic.

This sequence belongs to the membrane fusion protein (MFP) (TC 8.A.1) family. As to quaternary structure, could be part of a tripartite efflux system composed of MdtN, MdtO and MdtP.

The protein localises to the cell inner membrane. In terms of biological role, could be involved in resistance to puromycin, acriflavine and tetraphenylarsonium chloride. The sequence is that of Multidrug resistance protein MdtN (mdtN) from Escherichia coli (strain K12).